The primary structure comprises 432 residues: Meiotically up-regulated gene 134 protein (432 aa).

Belongs to the UPF0300 family.

It localises to the cytoplasm. The protein localises to the cell cortex. Its function is as follows. Has a role in meiosis. This Schizosaccharomyces pombe (strain 972 / ATCC 24843) (Fission yeast) protein is Meiotically up-regulated gene 134 protein (mug134).